The following is a 139-amino-acid chain: Nucleoside diphosphate kinase (139 aa).

Positions 10, 58, 86, 92, 104, and 114 each coordinate ATP. His117 acts as the Pros-phosphohistidine intermediate in catalysis.

The protein belongs to the NDK family. Homotetramer. It depends on Mg(2+) as a cofactor.

It localises to the cytoplasm. The catalysed reaction is a 2'-deoxyribonucleoside 5'-diphosphate + ATP = a 2'-deoxyribonucleoside 5'-triphosphate + ADP. The enzyme catalyses a ribonucleoside 5'-diphosphate + ATP = a ribonucleoside 5'-triphosphate + ADP. Major role in the synthesis of nucleoside triphosphates other than ATP. The ATP gamma phosphate is transferred to the NDP beta phosphate via a ping-pong mechanism, using a phosphorylated active-site intermediate. In Mycolicibacterium smegmatis (strain ATCC 700084 / mc(2)155) (Mycobacterium smegmatis), this protein is Nucleoside diphosphate kinase.